The primary structure comprises 155 residues: Aspartate carbamoyltransferase regulatory chain (155 aa).

C109, C114, C138, and C141 together coordinate Zn(2+).

It belongs to the PyrI family. As to quaternary structure, contains catalytic and regulatory chains. Requires Zn(2+) as cofactor.

Functionally, involved in allosteric regulation of aspartate carbamoyltransferase. In Vibrio cholerae serotype O1 (strain ATCC 39541 / Classical Ogawa 395 / O395), this protein is Aspartate carbamoyltransferase regulatory chain.